Reading from the N-terminus, the 167-residue chain is Thioredoxin M-type, chloroplastic (167 aa).

A chloroplast-targeting transit peptide spans 1–53 (MAMETCFRAWALHAPAGSKDRLLVGNLVLPSKRALAPLSVGRVATRRPRHVCQ). Residues 54-165 (SKNAVDEVVV…LTTLIDKYIG (112 aa)) enclose the Thioredoxin domain. Residues C89 and C92 are joined by a disulfide bond.

Belongs to the thioredoxin family. Plant M-type subfamily. As to quaternary structure, forms a complex with heterodimeric ferredoxin-thioredoxin reductase (FTR) and ferredoxin.

It is found in the plastid. The protein resides in the chloroplast. Participates in various redox reactions through the reversible oxidation of the active center dithiol to a disulfide. The M form is known to activate NADP-malate dehydrogenase. The polypeptide is Thioredoxin M-type, chloroplastic (TRM1) (Zea mays (Maize)).